Here is a 1859-residue protein sequence, read N- to C-terminus: Retinitis pigmentosa 1-like 1 protein (1859 aa).

Disordered stretches follow at residues 1–22 and 115–154; these read MNST…PSHR and RKPP…YSWK. The region spanning 42 to 126 is the Doublecortin 1 domain; that stretch reads KKITFLKRGD…PPKTSREPGR (85 aa). Over residues 115-126 the composition is skewed to basic and acidic residues; that stretch reads RKPPKTSREPGR. A compositionally biased stretch (polar residues) spans 130 to 139; that stretch reads KSPSAGQAQV. Residues 160 to 239 form the Doublecortin 2 domain; the sequence is RRLTLVKNGD…NEAFRCLEME (80 aa). Disordered stretches follow at residues 263-301, 426-445, 457-593, 700-750, 868-920, 952-997, 1152-1211, 1227-1255, 1298-1350, and 1567-1859; these read PNAK…SGHR, IWRN…RRRW, WRQE…TQSH, MPQE…TSKA, CFGR…TPSA, NTEV…GVLS, TEDF…YPEL, ATGG…STML, GSQD…RVRE, and LQSK…DLDF. Basic and acidic residues predominate over residues 457–472; sequence WRQEANHRKGHDKDNL. Composition is skewed to polar residues over residues 499–512 and 535–551; these read GSDT…ASSH and PETQ…SVSA. A compositionally biased stretch (low complexity) spans 716–728; that stretch reads SPSNSPSAGNQAS. Polar residues predominate over residues 734-750; the sequence is PFSSSLDLQEPQATSKA. Over residues 870–883 the composition is skewed to low complexity; that stretch reads GRESASNGSTSSGH. Composition is skewed to polar residues over residues 1241-1252, 1336-1345, and 1567-1577; these read TWGNAPEQSVHS, ESPQHFSESN, and LQSKKGGSSNR. Over residues 1616–1632 the composition is skewed to basic and acidic residues; it reads GEGKQRLRAEEDPEILK. A compositionally biased stretch (acidic residues) spans 1641-1652; it reads PEEDEATEEDGE. The span at 1700-1720 shows a compositional bias: basic and acidic residues; sequence EASRERQQEVEGRHQDVKEDS. Polar residues predominate over residues 1756–1778; sequence SHHTACSSRALSLDNSSQVSQKG.

In terms of assembly, interacts with RP1; has a synergistic effect with RP1 in photoreceptor differentiation. As to expression, retinal-specific; expressed in photoreceptor.

Its subcellular location is the cytoplasm. It localises to the cytoskeleton. The protein resides in the cilium axoneme. It is found in the cell projection. The protein localises to the cilium. Its subcellular location is the photoreceptor outer segment. Functionally, required for the differentiation of photoreceptor cells. Plays a role in the organization of outer segment of rod and cone photoreceptors. In Mus musculus (Mouse), this protein is Retinitis pigmentosa 1-like 1 protein (Rp1l1).